Here is a 334-residue protein sequence, read N- to C-terminus: Ribosomal RNA small subunit methyltransferase C (334 aa).

The protein belongs to the methyltransferase superfamily. RsmC family. Monomer.

Its subcellular location is the cytoplasm. It catalyses the reaction guanosine(1207) in 16S rRNA + S-adenosyl-L-methionine = N(2)-methylguanosine(1207) in 16S rRNA + S-adenosyl-L-homocysteine + H(+). Its function is as follows. Specifically methylates the guanine in position 1207 of 16S rRNA in the 30S particle. This Idiomarina loihiensis (strain ATCC BAA-735 / DSM 15497 / L2-TR) protein is Ribosomal RNA small subunit methyltransferase C.